The primary structure comprises 253 residues: tRNA pseudouridine synthase A (253 aa).

The Nucleophile role is filled by Asp53. Tyr112 is a binding site for substrate.

It belongs to the tRNA pseudouridine synthase TruA family. Homodimer.

The enzyme catalyses uridine(38/39/40) in tRNA = pseudouridine(38/39/40) in tRNA. In terms of biological role, formation of pseudouridine at positions 38, 39 and 40 in the anticodon stem and loop of transfer RNAs. The sequence is that of tRNA pseudouridine synthase A from Lactococcus lactis subsp. lactis (strain IL1403) (Streptococcus lactis).